The chain runs to 325 residues: Mitochondrial citrate transporter C (325 aa).

Solcar repeat units lie at residues 15-105 (ASPA…YKQM), 117-208 (KATF…LKAF), and 221-310 (LPSY…LKGK). 6 consecutive transmembrane segments (helical) span residues 21–41 (LIAG…LDTI), 82–102 (GAVL…YESY), 121–141 (LAGL…MEVV), 187–207 (TALR…ELKA), 221–241 (LPSY…PFSN), and 282–303 (FYKG…TFTV).

Belongs to the mitochondrial carrier (TC 2.A.29) family.

The protein localises to the mitochondrion inner membrane. Functionally, mitochondrial transporter that does not mediate citrate export from mitochondria to cytoplasm. Its exact function has still to be determined. The polypeptide is Mitochondrial citrate transporter C (Aspergillus niger (strain ATCC 1015 / CBS 113.46 / FGSC A1144 / LSHB Ac4 / NCTC 3858a / NRRL 328 / USDA 3528.7)).